Consider the following 572-residue polypeptide: Arginine--tRNA ligase (572 aa).

The short motif at 122-132 is the 'HIGH' region element; the sequence is PNLAKEMHVGH.

This sequence belongs to the class-I aminoacyl-tRNA synthetase family. Monomer.

It localises to the cytoplasm. It catalyses the reaction tRNA(Arg) + L-arginine + ATP = L-arginyl-tRNA(Arg) + AMP + diphosphate. In Neisseria gonorrhoeae (strain ATCC 700825 / FA 1090), this protein is Arginine--tRNA ligase.